The primary structure comprises 96 residues: Prokineticin Bv8 (96 aa).

The signal sequence occupies residues 1–19 (MKCFAQIVVLLLVIAFSHG). Positions 20-24 (AVITG) are may be important for binding to prokineticin receptor 2. 5 disulfide bridges follow: cysteine 26–cysteine 38, cysteine 32–cysteine 50, cysteine 37–cysteine 78, cysteine 60–cysteine 86, and cysteine 80–cysteine 95.

In terms of tissue distribution, expressed by the skin glands.

The protein resides in the secreted. Potent agonist for both PKR1/PROKR1 and PKR2/PROKR2, and inducer of a potent and long-lasting hyperalgesia. Shows an EC(50) of 0.264 nM, when tested on neuroblastoma cells (SH-SY5Y) which endogenously express mainly PKR2/PROKR2. Also potentiates capsaicin-induced TRPV1 current, when tested on DRG neurons. Induces a biphasic hyperalgesia to tactile and thermal stimuli after systemic injection of this protein into rat. The initial phase of hyperalgesia is caused by a local action on nociceptors, because intraplantar injection of this protein causes a strong and localized hyperalgesia with a similar time course to that of the initial phase of hyperalgesia seen with systemic injection. The secondary phase of hyperalgesia is not seen with local intraplantar injection and is therefore probably attributable to a central action of this protein. At subnanomolar concentrations, this protein both induces potent chemotaxis of macrophages and stimulates LPS-induced production of the pro-inflammatory cytokines IL-1 and IL-12. In vivo, this protein potently stimulates the contraction of the guinea-pig gastrointestinal (GI) smooth muscle (at nanomolar concentration). In Bombina variegata (Yellow-bellied toad), this protein is Prokineticin Bv8.